The primary structure comprises 1048 residues: PH and SEC7 domain-containing protein 3 (1048 aa).

Basic and acidic residues predominate over residues 36 to 45 (SEGKAPDTSD). The tract at residues 36–57 (SEGKAPDTSDHGGSTLLPPNVT) is disordered. Ser-76 carries the phosphoserine modification. Disordered regions lie at residues 104-126 (LDSV…LKEQ), 310-342 (GGDK…KVPR), 364-383 (SWKA…SPVR), and 395-434 (QENK…PGYT). Residues 311–321 (GDKRETQHPID) are compositionally biased toward basic and acidic residues. Residues 397 to 423 (NKQHLEKTPKPERDRERISEQEEHVKG) are compositionally biased toward basic and acidic residues. The region spanning 534-734 (TKGTPEIAFW…KALYNSIKNE (201 aa)) is the SEC7 domain. A compositionally biased stretch (basic and acidic residues) spans 741–758 (DDEEKKKSPSESTEEKAN). Residues 741-769 (DDEEKKKSPSESTEEKANGTHPKTISRIG) form a disordered region. Residue Ser-770 is modified to Phosphoserine. The region spanning 785-898 (AVYKSGFLAR…WINKINCVAA (114 aa)) is the PH domain. Residues 922 to 952 (ATTTKLSQEEQLKSHESKLKQITTELAEHRS) adopt a coiled-coil conformation. The interval 999-1048 (DESEAAGLKKSHSSPSLNPDTSPITAKVKRNVSERKDHRPETPSIKQKVT) is disordered. Phosphoserine is present on residues Ser-1009, Ser-1011, Ser-1012, Ser-1014, and Ser-1020. Residues 1011-1022 (SSPSLNPDTSPI) are compositionally biased toward polar residues. Basic and acidic residues predominate over residues 1029 to 1039 (NVSERKDHRPE).

In terms of tissue distribution, isoform 2 is expressed in epididymis (at protein level).

The protein resides in the cell membrane. It is found in the cell projection. It localises to the ruffle membrane. Its subcellular location is the postsynaptic density. Guanine nucleotide exchange factor for ARF6. This chain is PH and SEC7 domain-containing protein 3 (PSD3), found in Homo sapiens (Human).